A 900-amino-acid polypeptide reads, in one-letter code: 3'-5' exonuclease DinG (900 aa).

The region spanning 8–161 (VVDLETTGNQ…DEDATTTALL (154 aa)) is the Exonuclease domain. The Helicase ATP-binding domain maps to 241-496 (SEVVKSLNLT…KAIDKLEQQR (256 aa)). Residue 276 to 283 (APLGSGKS) coordinates ATP. Residues 448 to 451 (DEAH) carry the DEAH box motif. Residues 713 to 893 (DYIQEYVTIT…QFSKLVNKIQ (181 aa)) form the Helicase C-terminal domain.

This sequence belongs to the helicase family. DinG subfamily. Type 2 sub-subfamily.

In terms of biological role, 3'-5' exonuclease. This chain is 3'-5' exonuclease DinG, found in Staphylococcus haemolyticus (strain JCSC1435).